A 283-amino-acid chain; its full sequence is 1-deoxypentalenic acid 11-beta-hydroxylase (283 aa).

Arg-117 contacts substrate. Fe cation-binding residues include His-135 and Asp-137. Residues 135-137 (HQD) and Trp-151 each bind 2-oxoglutarate. Arg-186 contacts substrate. Residue His-224 participates in Fe cation binding. 2 residues coordinate 2-oxoglutarate: Ser-226 and Arg-238. Positions 260-283 (WPESAKDASKGILSKITGTPTTAE) are disordered.

This sequence belongs to the PhyH family. Fe cation serves as cofactor. L-ascorbate is required as a cofactor.

It carries out the reaction 1-deoxypentalenate + 2-oxoglutarate + O2 = 1-deoxy-11beta-hydroxypentalenate + succinate + CO2. It functions in the pathway antibiotic biosynthesis; pentalenolactone biosynthesis. Catalyzes the conversion of 1-deoxypentalenic acid to 11-beta-hydroxy-1-deoxypentalenic acid in the biosynthesis of pentalenolactone antibiotic. This Streptomyces exfoliatus (Streptomyces hydrogenans) protein is 1-deoxypentalenic acid 11-beta-hydroxylase (penH).